A 258-amino-acid chain; its full sequence is Pyridoxine 5'-phosphate synthase (258 aa).

A 3-amino-2-oxopropyl phosphate-binding site is contributed by N6. 8 to 9 serves as a coordination point for 1-deoxy-D-xylulose 5-phosphate; sequence DH. R17 provides a ligand contact to 3-amino-2-oxopropyl phosphate. The active-site Proton acceptor is the H42. 1-deoxy-D-xylulose 5-phosphate is bound by residues R44 and H49. The Proton acceptor role is filled by E69. T99 lines the 1-deoxy-D-xylulose 5-phosphate pocket. H213 acts as the Proton donor in catalysis. Residues G214 and 235 to 236 each bind 3-amino-2-oxopropyl phosphate; that span reads GQ.

This sequence belongs to the PNP synthase family. As to quaternary structure, homooctamer; tetramer of dimers.

The protein resides in the cytoplasm. The enzyme catalyses 3-amino-2-oxopropyl phosphate + 1-deoxy-D-xylulose 5-phosphate = pyridoxine 5'-phosphate + phosphate + 2 H2O + H(+). Its pathway is cofactor biosynthesis; pyridoxine 5'-phosphate biosynthesis; pyridoxine 5'-phosphate from D-erythrose 4-phosphate: step 5/5. Catalyzes the complicated ring closure reaction between the two acyclic compounds 1-deoxy-D-xylulose-5-phosphate (DXP) and 3-amino-2-oxopropyl phosphate (1-amino-acetone-3-phosphate or AAP) to form pyridoxine 5'-phosphate (PNP) and inorganic phosphate. This chain is Pyridoxine 5'-phosphate synthase, found in Sulfurovum sp. (strain NBC37-1).